Consider the following 120-residue polypeptide: MARVKFGKVTRARRKRWIKRAKGYYGTKHSSYKKAHEQVVRSMAYAFIGRKQKKRDFRKLWIVRINAAVRPYGLSYSKFMNGLKLANIDVNRKMLSELAISNPEQFKLLVDASNKALTSK.

It belongs to the bacterial ribosomal protein bL20 family.

In terms of biological role, binds directly to 23S ribosomal RNA and is necessary for the in vitro assembly process of the 50S ribosomal subunit. It is not involved in the protein synthesizing functions of that subunit. This chain is Large ribosomal subunit protein bL20, found in Mesoplasma florum (strain ATCC 33453 / NBRC 100688 / NCTC 11704 / L1) (Acholeplasma florum).